Here is a 358-residue protein sequence, read N- to C-terminus: Neutral protease 2 homolog MGYG_02351 (358 aa).

The first 17 residues, 1–17 (MQFVALLAALGAPLALA), serve as a signal peptide directing secretion. A propeptide spanning residues 18–183 (ASIPAAHNNS…DSPAGVIDKR (166 aa)) is cleaved from the precursor. Intrachain disulfides connect Cys191–Cys260 and Cys267–Cys285. His309 is a binding site for Zn(2+). Residue Glu310 is part of the active site. Positions 313 and 324 each coordinate Zn(2+).

Belongs to the peptidase M35 family. It depends on Zn(2+) as a cofactor.

It is found in the secreted. It carries out the reaction Preferential cleavage of bonds with hydrophobic residues in P1'. Also 3-Asn-|-Gln-4 and 8-Gly-|-Ser-9 bonds in insulin B chain.. Functionally, secreted metalloproteinase that allows assimilation of proteinaceous substrates. Shows high activities on basic nuclear substrates such as histone and protamine. May be involved in virulence. In Arthroderma gypseum (strain ATCC MYA-4604 / CBS 118893) (Microsporum gypseum), this protein is Neutral protease 2 homolog MGYG_02351.